The sequence spans 59 residues: uncharacterized protein (59 aa).

The tract at residues 27–59 (SCFQNRPPEPASFQNLRPEPASLQNLRTEPTSF) is disordered. The span at 48-59 (SLQNLRTEPTSF) shows a compositional bias: polar residues.

This is an uncharacterized protein from Homo sapiens (Human).